A 129-amino-acid chain; its full sequence is Small ribosomal subunit protein uS11 (129 aa).

It belongs to the universal ribosomal protein uS11 family. As to quaternary structure, part of the 30S ribosomal subunit. Interacts with proteins S7 and S18. Binds to IF-3.

Located on the platform of the 30S subunit, it bridges several disparate RNA helices of the 16S rRNA. Forms part of the Shine-Dalgarno cleft in the 70S ribosome. This chain is Small ribosomal subunit protein uS11, found in Serratia proteamaculans (strain 568).